We begin with the raw amino-acid sequence, 551 residues long: uncharacterized protein (551 aa).

Helical transmembrane passes span 1 to 21, 25 to 45, 99 to 119, 124 to 144, 266 to 286, and 490 to 510; these read MIAY…IVNS, WTYF…LMVS, GALF…FGFN, LGVL…SLMW, FAFL…GVFY, and FLDL…SAED.

The protein resides in the cell membrane. This is an uncharacterized protein from Haemophilus influenzae (strain ATCC 51907 / DSM 11121 / KW20 / Rd).